The following is a 286-amino-acid chain: Polyamine aminopropyltransferase (286 aa).

Positions Thr-5–Asp-238 constitute a PABS domain. Residue Gln-33 coordinates S-methyl-5'-thioadenosine. His-64 and Asp-88 together coordinate spermidine. S-methyl-5'-thioadenosine is bound by residues Glu-108 and Asp-140–Gly-141. Asp-158 (proton acceptor) is an active-site residue. Position 158–161 (Asp-158–Asp-161) interacts with spermidine. Pro-165 serves as a coordination point for S-methyl-5'-thioadenosine.

It belongs to the spermidine/spermine synthase family. Homodimer or homotetramer.

Its subcellular location is the cytoplasm. It carries out the reaction S-adenosyl 3-(methylsulfanyl)propylamine + putrescine = S-methyl-5'-thioadenosine + spermidine + H(+). Its pathway is amine and polyamine biosynthesis; spermidine biosynthesis; spermidine from putrescine: step 1/1. Its function is as follows. Catalyzes the irreversible transfer of a propylamine group from the amino donor S-adenosylmethioninamine (decarboxy-AdoMet) to putrescine (1,4-diaminobutane) to yield spermidine. In Salmonella schwarzengrund (strain CVM19633), this protein is Polyamine aminopropyltransferase.